Reading from the N-terminus, the 168-residue chain is G/U mismatch-specific DNA glycosylase (168 aa).

The protein belongs to the uracil-DNA glycosylase (UDG) superfamily. TDG/mug family. As to quaternary structure, binds DNA as a monomer.

Its subcellular location is the cytoplasm. It catalyses the reaction Specifically hydrolyzes mismatched double-stranded DNA and polynucleotides, releasing free uracil.. In terms of biological role, excises ethenocytosine and uracil, which can arise by alkylation or deamination of cytosine, respectively, from the corresponding mispairs with guanine in ds-DNA. It is capable of hydrolyzing the carbon-nitrogen bond between the sugar-phosphate backbone of the DNA and the mispaired base. The complementary strand guanine functions in substrate recognition. Required for DNA damage lesion repair in stationary-phase cells. The sequence is that of G/U mismatch-specific DNA glycosylase from Escherichia coli (strain SMS-3-5 / SECEC).